Reading from the N-terminus, the 203-residue chain is MLAKLDRLLSQANIPLTDQQKQQLVDFVKLLDKWNKAYNLTSVRNPDEMLVKHIMDSLVVSQHLQGQQFIDVGTGPGLPGIPLAIANPDKQFVLLDSLGKRITFIKNAIRELKLTNVTPVLSRVEEYQEQQFDGVLSRAFASLNDMVDWCYHLPNTSGHFYALKGQYQPEELAEVSKPIELVDVIKLNVPELVGERHLVVLNR.

S-adenosyl-L-methionine is bound by residues G73, L78, 124 to 125 (VE), and R138.

The protein belongs to the methyltransferase superfamily. RNA methyltransferase RsmG family.

It localises to the cytoplasm. It carries out the reaction guanosine(527) in 16S rRNA + S-adenosyl-L-methionine = N(7)-methylguanosine(527) in 16S rRNA + S-adenosyl-L-homocysteine. In terms of biological role, specifically methylates the N7 position of guanine in position 527 of 16S rRNA. This is Ribosomal RNA small subunit methyltransferase G from Glaesserella parasuis serovar 5 (strain SH0165) (Haemophilus parasuis).